The following is a 130-amino-acid chain: Secreted RxLR effector protein 66 (130 aa).

An N-terminal signal peptide occupies residues 1–21 (MHLRLLMSTVITATLIVSNNA). Residues 32–62 (RALRGASTVGIAADNLLAAHFSPTLKHKESR) carry the RxLR-dEER motif. A helical membrane pass occupies residues 104–124 (GPAIAIFAGVAATFILIDYLI).

Belongs to the RxLR effector family.

The protein resides in the secreted. It is found in the host cytoplasm. It localises to the host nucleus. The protein localises to the membrane. Functionally, effector that acts as a broad suppressor of cell death to interrupt plant immunity. Inhibits cell death induced by cell death-inducing proteins, including the PAMP elicitor INF1 from P.infestans. The protein is Secreted RxLR effector protein 66 of Plasmopara viticola (Downy mildew of grapevine).